A 273-amino-acid chain; its full sequence is Rhamnulose-1-phosphate aldolase (273 aa).

E117 is an active-site residue. Residues H140, H142, and H211 each coordinate Zn(2+).

It belongs to the aldolase class II family. RhaD subfamily. Zn(2+) is required as a cofactor.

It localises to the cytoplasm. It catalyses the reaction L-rhamnulose 1-phosphate = (S)-lactaldehyde + dihydroxyacetone phosphate. It participates in carbohydrate degradation; L-rhamnose degradation; glycerone phosphate from L-rhamnose: step 3/3. Its function is as follows. Catalyzes the reversible cleavage of L-rhamnulose-1-phosphate to dihydroxyacetone phosphate (DHAP) and L-lactaldehyde. The chain is Rhamnulose-1-phosphate aldolase from Listeria monocytogenes serovar 1/2a (strain ATCC BAA-679 / EGD-e).